The following is a 515-amino-acid chain: Bifunctional purine biosynthesis protein PurH (515 aa).

The 145-residue stretch at Met1–Val145 folds into the MGS-like domain.

The protein belongs to the PurH family.

The catalysed reaction is (6R)-10-formyltetrahydrofolate + 5-amino-1-(5-phospho-beta-D-ribosyl)imidazole-4-carboxamide = 5-formamido-1-(5-phospho-D-ribosyl)imidazole-4-carboxamide + (6S)-5,6,7,8-tetrahydrofolate. The enzyme catalyses IMP + H2O = 5-formamido-1-(5-phospho-D-ribosyl)imidazole-4-carboxamide. It functions in the pathway purine metabolism; IMP biosynthesis via de novo pathway; 5-formamido-1-(5-phospho-D-ribosyl)imidazole-4-carboxamide from 5-amino-1-(5-phospho-D-ribosyl)imidazole-4-carboxamide (10-formyl THF route): step 1/1. It participates in purine metabolism; IMP biosynthesis via de novo pathway; IMP from 5-formamido-1-(5-phospho-D-ribosyl)imidazole-4-carboxamide: step 1/1. The polypeptide is Bifunctional purine biosynthesis protein PurH (Streptococcus suis).